We begin with the raw amino-acid sequence, 446 residues long: MEKYLSVTTLTKYLKMKFDKDPYLERVYLTGQVSNFRKRPTHQYFSLKDDHAVIQATIWSGIYQKLGFDLEEGMKINVIGRVQVYEPSGSYSIIIEKVEPDGVGALAIQFEQLKKKLTEEGLFQERFKQALPQFSKRIGVVTSRSGAVIRDIITTVSRRFPGVDILLYPTKVQGEGAAEEIARNIARANQRDDLDLLIIGRGGGSIEDLWAFNEEIVVRAIFESRLPVISSVGHETDVTLADFVADRRAATPTAAAELATPVTKLDVLAHLQNQEKRMVTAVRNVLSKKQEALKKCSQSVIFRQPERLYDGYLQRLDQLQLRLKQSLRTRISDNKQLVQARTHQLVQLSPVTKIQRYQDRLGQLDKLLGSQMALVYDAKVAEAKRLSEALLMLDTSRIVARGYAIVKKEESVVDSVESLKKKDQVTLLMRDGQVELEVKDVKTKEI.

The protein belongs to the XseA family. In terms of assembly, heterooligomer composed of large and small subunits.

The protein localises to the cytoplasm. The enzyme catalyses Exonucleolytic cleavage in either 5'- to 3'- or 3'- to 5'-direction to yield nucleoside 5'-phosphates.. Functionally, bidirectionally degrades single-stranded DNA into large acid-insoluble oligonucleotides, which are then degraded further into small acid-soluble oligonucleotides. The chain is Exodeoxyribonuclease 7 large subunit from Streptococcus pneumoniae (strain ATCC BAA-255 / R6).